We begin with the raw amino-acid sequence, 876 residues long: MKNLKASEIRQNFIDYFVEKGHMVEPSAPLVPIDDDSLLWINSGVATLKKYFDGRETPRKPRIVNSQKAIRTNDIENVGFTARHHTFFEMLGNFSIGDYFKQEAIEFAWEFLTSEKWMAMEPKLLYVTIHPEDKEAYRIWNEDIGLEESRIIRIEGNFWDIGEGPSGPNTEIFYDRGEDFGQDDPAEEMYPGGENERFLEVWNLVFSEFNHNKDHTYTPLPNKNIDTGMGLERMASLAQNVRTNYETDLFMPIIHEVEKVSGKTYLENDNYDVAFKVIADHIRTIAFAIADGALPANEGRGYVLRRLLRRAVRFSQSLDINEPFMYRLVDIVADIMEPYYPNVKEKADFIKRVIKSEEERFHETLEEGLAILNNLVAQAKTSTHEISGKDAFKLYDTYGFPVELTEEIATQENLSIDMQTFEEEMQQQRDRARQARQNSQSMQVQSEVLKKITTDSTFVGYDVMDKASVITDIIQNGELVESAEAGETIYFILRETPFYAVSGGQVADQGTISNENFEIAVTEVTKAPNGQNLHKGEIQFGTVKKNAEVSASVNHKERRSIKKNHSATHLLHAALKEVLGDHVNQAGSLVEADRLRFDFSHFGPMTQEEIDTVERRVNEEIWNSIEVDIQEMPISEAKQLGAMALFGEKYGEIVRVVNMAPFSIELCGGIHVNNTAEIGLFKIVSESGTGAGVRRIEALTGKSAFLYLETIQSQFNAVKSQVKVKSDDQVLEKIVHMQDEEKELTKQLEQKNKEVTSLKMGDITNQVEEINGLKVLATEVDVPNAKAIRETMDDFKSKLQDTVIVLISNIDGKVSLVATVPKALTDKVKAGDIIKNMAPVVGGKGGGRPDMAQGGGTEPKNITESLRFIKDYIKSL.

Zn(2+) is bound by residues H565, H569, C667, and H671.

Belongs to the class-II aminoacyl-tRNA synthetase family. The cofactor is Zn(2+).

The protein localises to the cytoplasm. The catalysed reaction is tRNA(Ala) + L-alanine + ATP = L-alanyl-tRNA(Ala) + AMP + diphosphate. Catalyzes the attachment of alanine to tRNA(Ala) in a two-step reaction: alanine is first activated by ATP to form Ala-AMP and then transferred to the acceptor end of tRNA(Ala). Also edits incorrectly charged Ser-tRNA(Ala) and Gly-tRNA(Ala) via its editing domain. In Staphylococcus saprophyticus subsp. saprophyticus (strain ATCC 15305 / DSM 20229 / NCIMB 8711 / NCTC 7292 / S-41), this protein is Alanine--tRNA ligase.